Reading from the N-terminus, the 487-residue chain is Lysophospholipid acyltransferase 5 (487 aa).

An N-acetylalanine modification is found at Ala2. A run of 6 helical transmembrane segments spans residues Leu44–Tyr64, Ser67–Gly87, Ile111–Tyr131, Ile178–Leu198, Leu236–Leu256, and Val285–Phe305. N-linked (GlcNAc...) asparagine glycosylation is present at Asn308. Active-site residues include Asn338 and His374. Transmembrane regions (helical) follow at residues Gly364–Phe384, Leu422–Phe442, and Ser453–Tyr473. The Di-lysine motif motif lies at Lys484–Glu487.

This sequence belongs to the membrane-bound acyltransferase family.

It is found in the endoplasmic reticulum membrane. The enzyme catalyses a 1-acyl-sn-glycero-3-phosphocholine + an acyl-CoA = a 1,2-diacyl-sn-glycero-3-phosphocholine + CoA. It carries out the reaction a 1-acyl-sn-glycero-3-phosphoethanolamine + an acyl-CoA = a 1,2-diacyl-sn-glycero-3-phosphoethanolamine + CoA. It catalyses the reaction a 1-acyl-sn-glycero-3-phospho-L-serine + an acyl-CoA = a 1,2-diacyl-sn-glycero-3-phospho-L-serine + CoA. The catalysed reaction is (9Z,12Z)-octadecadienoyl-CoA + a 1-acyl-sn-glycero-3-phosphocholine = 1-acyl-2-(9Z,12Z)-octadecadienoyl-sn-glycero-3-phosphocholine + CoA. The enzyme catalyses (5Z,8Z,11Z,14Z)-eicosatetraenoyl-CoA + a 1-acyl-sn-glycero-3-phosphocholine = 1-acyl-2-(5Z,8Z,11Z,14Z-eicosatetraenoyl)-sn-glycero-3-phosphocholine + CoA. It carries out the reaction dodecanoyl-CoA + 1-hexadecanoyl-sn-glycero-3-phosphocholine = 1-hexadecanoyl-2-dodecanoyl-sn-glycero-3-phosphocholine + CoA. It catalyses the reaction octadecanoyl-CoA + 1-hexadecanoyl-sn-glycero-3-phosphocholine = 1-hexadecanoyl-2-octadecanoyl-sn-glycero-3-phosphocholine + CoA. The catalysed reaction is 1-dodecanoyl-sn-glycero-3-phosphocholine + hexadecanoyl-CoA = 1-dodecanoyl-2-hexadecanoyl-sn-glycero-3-phosphocholine + CoA. The enzyme catalyses 1-tetradecanoyl-sn-glycero-3-phosphocholine + hexadecanoyl-CoA = 1-tetradecanoyl-2-hexadecanoyl-sn-glycero-3-phosphocholine + CoA. It carries out the reaction 1-hexadecanoyl-sn-glycero-3-phosphocholine + hexadecanoyl-CoA = 1,2-dihexadecanoyl-sn-glycero-3-phosphocholine + CoA. It catalyses the reaction 1-octadecanoyl-sn-glycero-3-phosphocholine + hexadecanoyl-CoA = 1-octadecanoyl-2-hexadecanoyl-sn-glycero-3-phosphocholine + CoA. The catalysed reaction is 1-(9Z-octadecenoyl)-sn-glycero-3-phosphocholine + hexadecanoyl-CoA = 1-(9Z-octadecenoyl)-2-hexadecanoyl-sn-glycero-3-phosphocholine + CoA. The enzyme catalyses (9Z)-hexadecenoyl-CoA + 1-hexadecanoyl-sn-glycero-3-phosphocholine = 1-hexadecanoyl-2-(9Z-hexadecenoyl)-sn-glycero-3-phosphocholine + CoA. It carries out the reaction 1-hexadecanoyl-sn-glycero-3-phosphocholine + (9Z)-octadecenoyl-CoA = 1-hexadecanoyl-2-(9Z-octadecenoyl)-sn-glycero-3-phosphocholine + CoA. It catalyses the reaction (9Z,12Z)-octadecadienoyl-CoA + 1-hexadecanoyl-sn-glycero-3-phosphocholine = 1-hexadecanoyl-2-(9Z,12Z-octadecadienoyl)-sn-glycero-3-phosphocholine + CoA. The catalysed reaction is 1-dodecanoyl-sn-glycero-3-phosphocholine + (5Z,8Z,11Z,14Z)-eicosatetraenoyl-CoA = 1-dodecanoyl-2-(5Z,8Z,11Z,14Z)-eicosatetraenoyl-sn-glycero-3-phosphocholine + CoA. The enzyme catalyses (5Z,8Z,11Z,14Z)-eicosatetraenoyl-CoA + 1-hexadecanoyl-sn-glycero-3-phosphocholine = 1-hexadecanoyl-2-(5Z,8Z,11Z,14Z-eicosatetraenoyl)-sn-glycero-3-phosphocholine + CoA. It carries out the reaction 1-octadecanoyl-sn-glycero-3-phosphocholine + (5Z,8Z,11Z,14Z)-eicosatetraenoyl-CoA = 1-octadecanoyl-2-(5Z,8Z,11Z,14Z-eicosatetraenoyl)-sn-glycero-3-phosphocholine + CoA. It catalyses the reaction 1-eicosanoyl-sn-glycero-3-phosphocholine + (5Z,8Z,11Z,14Z)-eicosatetraenoyl-CoA = 1-eicosanoyl-2-(5Z,8Z,11Z,14Z)-eicosatetraenoyl-sn-glycero-3-phosphocholine + CoA. The catalysed reaction is 1-(9Z-octadecenoyl)-sn-glycero-3-phosphocholine + (9Z)-octadecenoyl-CoA = 1,2-di-(9Z-octadecenoyl)-sn-glycero-3-phosphocholine + CoA. The enzyme catalyses 1-(9Z-octadecenoyl)-sn-glycero-3-phosphocholine + (9Z,12Z)-octadecadienoyl-CoA = 1-(9Z)-octadecenoyl-2-(9Z,12Z)-octadecadienoyl-sn-glycero-3-phosphocholine + CoA. It carries out the reaction 1-(9Z-octadecenoyl)-sn-glycero-3-phosphocholine + (5Z,8Z,11Z,14Z)-eicosatetraenoyl-CoA = 1-(9Z)-octadecenoyl-2-(5Z,8Z,11Z,14Z)-icosatetraenoyl-sn-glycero-3-phosphocholine + CoA. It catalyses the reaction a 1-acyl-sn-glycero-3-phosphoethanolamine + (9Z,12Z)-octadecadienoyl-CoA = 1-acyl-2-(9Z,12Z)-octadecadienoyl-sn-glycero-3-phosphoethanolamine + CoA. The catalysed reaction is 1-(9Z-octadecenoyl)-sn-glycero-3-phosphoethanolamine + (9Z,12Z)-octadecadienoyl-CoA = 1-(9Z)-octadecenoyl-2-(9Z,12Z)-octadecadienoyl-sn-glycero-3-phosphoethanolamine + CoA. The enzyme catalyses 1-(10Z-heptadecenoyl)-sn-glycero-3-phosphoethanolamine + (9Z,12Z)-octadecadienoyl-CoA = 1-(10Z-heptadecenoyl)-2-(9Z,12Z-octadecadienoyl)-sn-glycero-3-phosphoethanolamine + CoA. It carries out the reaction a 1-acyl-sn-glycero-3-phosphoethanolamine + (5Z,8Z,11Z,14Z)-eicosatetraenoyl-CoA = 1-acyl-2-(5Z,8Z,11Z,14Z)-eicosatetraenoyl-sn-glycero-3-phosphoethanolamine + CoA. It catalyses the reaction 1-hexadecanoyl-sn-glycero-3-phosphoethanolamine + (5Z,8Z,11Z,14Z)-eicosatetraenoyl-CoA = 1-hexadecanoyl-2-(5Z,8Z,11Z,14Z-eicosatetraenoyl)-sn-glycero-3-phosphoethanolamine + CoA. The catalysed reaction is 1-(9Z-octadecenoyl)-sn-glycero-3-phosphoethanolamine + (5Z,8Z,11Z,14Z)-eicosatetraenoyl-CoA = 1-(9Z)-octadecenoyl-2-(5Z,8Z,11Z,14Z)-eicosatetraenoyl-sn-glycero-3-phosphoethanolamine + CoA. The enzyme catalyses 1-(10Z-heptadecenoyl)-sn-glycero-3-phosphoethanolamine + (5Z,8Z,11Z,14Z)-eicosatetraenoyl-CoA = 1-(10Z-heptadecenoyl)-2-(5Z,8Z,11Z,14Z-eicosatetraenoyl)-sn-glycero-3-phosphoethanolamine + CoA. It carries out the reaction a 1-O-(1Z-alkenyl)-sn-glycero-3-phosphoethanolamine + (5Z,8Z,11Z,14Z)-eicosatetraenoyl-CoA = 1-O-(1Z)-alkenyl-2-(5Z,8Z,11Z,14Z)-eicosatetraenoyl-sn-glycero-3-phosphoethanolamine + CoA. It catalyses the reaction a 1-acyl-sn-glycero-3-phospho-L-serine + (9Z,12Z)-octadecadienoyl-CoA = 1-acyl-2-(9Z,12Z-octadecadienoyl)-sn-glycero-3-phospho-L-serine + CoA. The catalysed reaction is a 1-acyl-sn-glycero-3-phospho-L-serine + (5Z,8Z,11Z,14Z)-eicosatetraenoyl-CoA = 1-acyl-2-(5Z,8Z,11Z,14Z-eicosatetraenoyl)-sn-glycero-3-phospho-L-serine + CoA. The enzyme catalyses 1-hexadecanoyl-sn-glycero-3-phospho-L-serine + (9Z)-octadecenoyl-CoA = 1-hexadecanoyl-2-(9Z-octadecenoyl)-sn-glycero-3-phospho-L-serine + CoA. It carries out the reaction 1-(9Z-octadecenoyl)-sn-glycero-3-phospho-L-serine + (9Z)-octadecenoyl-CoA = 1,2-di-(9Z)-octadecenoyl-sn-glycero-3-phospho-L-serine + CoA. It catalyses the reaction 1-hexadecanoyl-sn-glycero-3-phospho-L-serine + (9Z,12Z)-octadecadienoyl-CoA = 1-hexadecanoyl-2-(9Z,12Z-octadecadienoyl)-sn-glycero-3-phospho-L-serine + CoA. The catalysed reaction is 1-(9Z-octadecenoyl)-sn-glycero-3-phospho-L-serine + (9Z,12Z)-octadecadienoyl-CoA = 1-(9Z-octadecenoyl)-2-(9Z,12Z-octadienoyl)-sn-glycero-3-phospho-L-serine + CoA. The enzyme catalyses 1-hexadecanoyl-sn-glycero-3-phospho-L-serine + (5Z,8Z,11Z,14Z)-eicosatetraenoyl-CoA = 1-hexadecanoyl-2-(5Z,8Z,11Z,14Z-eicosatetraenoyl)-sn-glycero-3-phospho-L-serine + CoA. It carries out the reaction 1-(9Z-octadecenoyl)-sn-glycero-3-phospho-L-serine + (5Z,8Z,11Z,14Z)-eicosatetraenoyl-CoA = 1-(9Z-octadecenoyl)-2-(5Z,8Z,11Z,14Z-eicosatetraenoyl)-sn-glycero-3-phospho-L-serine + CoA. Its pathway is lipid metabolism; phospholipid metabolism. Functionally, lysophospholipid O-acyltransferase (LPLAT) that catalyzes the reacylation step of the phospholipid remodeling process also known as the Lands cycle. Catalyzes transfer of the fatty acyl chain from fatty acyl-CoA to 1-acyl lysophospholipid to form various classes of phospholipids. Converts 1-acyl lysophosphatidylcholine (LPC) into phosphatidylcholine (PC) (LPCAT activity), 1-acyl lysophosphatidylserine (LPS) into phosphatidylserine (PS) (LPSAT activity) and 1-acyl lysophosphatidylethanolamine (LPE) into phosphatidylethanolamine (PE) (LPEAT activity). Favors polyunsaturated fatty acyl-CoAs as acyl donors compared to saturated fatty acyl-CoAs. Has higher activity for LPC acyl acceptors compared to LPEs and LPSs. Can also transfer the fatty acyl chain from fatty acyl-CoA to 1-O-alkyl lysophospholipid or 1-O-alkenyl lysophospholipid with lower efficiency. Acts as a major LPC O-acyltransferase in liver and intestine. As a component of the liver X receptor/NR1H3 or NR1H2 signaling pathway, mainly catalyzes the incorporation of arachidonate into PCs of endoplasmic reticulum (ER) membranes, increasing membrane dynamics and enabling triacylglycerols transfer to nascent very low-density lipoprotein (VLDL) particles. Promotes processing of sterol regulatory protein SREBF1 in hepatocytes, likely by facilitating the translocation of SREBF1-SCAP complex from ER to the Golgi apparatus. Participates in mechanisms by which the liver X receptor/NR1H3 or NR1H2 signaling pathway counteracts lipid-induced ER stress response and inflammation. Down-regulates hepatic inflammation by limiting arachidonic acid availability for synthesis of inflammatory eicosanoids, such as prostaglandins. In enterocytes, acts as a component of a gut-brain feedback loop that coordinates dietary lipid absorption and food intake. Regulates the abundance of PCs containing linoleate and arachidonate in enterocyte membranes, enabling passive diffusion of fatty acids and cholesterol across the membrane for efficient chylomicron assembly. In the intestinal crypt, acts as a component of dietary-responsive phospholipid-cholesterol axis, regulating the biosynthesis of cholesterol and its mitogenic effects on intestinal stem cells. The sequence is that of Lysophospholipid acyltransferase 5 (Lpcat3) from Rattus norvegicus (Rat).